Here is a 102-residue protein sequence, read N- to C-terminus: MNKIRKGDRVIVRTGKDKGKQGTVLAVLGEHVTVEGVNVAKKHVRPNPMLGTTGGVVDKVMPIHISNVALVDANGKPSRVGIKVENGVKTRVLKTTGAAVGA.

The protein belongs to the universal ribosomal protein uL24 family. As to quaternary structure, part of the 50S ribosomal subunit.

One of two assembly initiator proteins, it binds directly to the 5'-end of the 23S rRNA, where it nucleates assembly of the 50S subunit. In terms of biological role, one of the proteins that surrounds the polypeptide exit tunnel on the outside of the subunit. This Ralstonia nicotianae (strain ATCC BAA-1114 / GMI1000) (Ralstonia solanacearum) protein is Large ribosomal subunit protein uL24.